Consider the following 102-residue polypeptide: Circadian clock oscillator protein KaiB (102 aa).

It belongs to the KaiB family. As to quaternary structure, undergoes a major conformational rearrangment; in the free state forms homotetramers with 2 dimers. When bound to the CI domain of KaiC switches to a monomeric thioredoxin-fold (KaiB(fs)). Monomers, homodimers and homotetramers are detected in solution; at low concentrations only monomers are seen. In vitro forms KaiC(6):KaiB(1) and KaiC(6):KaiB(6) complexes. Only associates with 'Ser-431'-phosphorylated KaiC (and not with doubly phosphorylated KaiC). Complex formation between KaiB and KaiC is regulated by the phosphorylation state of KaiC and by an ATP hydrolysis-driven conformation change in the CI ring of KaiC; complex formation is slow. Slow complex formation is crucial for the timing of the circadian period. In low resolution cryo-EM forms a KaiC(6):KaiB(6) complex. The KaiABC complex composition changes during the circadian cycle to control KaiC phosphorylation. Complexes KaiC(6), KaiA(2-4):KaiC(6), KaiB(6):KaiC(6) and KaiC(6):KaiB(6):KaiA(12) are among the most important forms, many form cooperatively. The KaiB:KaiC complex is more prevalent at 16 hours (in the dark) than at 4 hours (in the light) in the circadian cycle. The KaiA:KaiB complex is only found at 20-24 hours in the circadian cycle (subjective night). Binds to the CI domain of KaiC; SasA and KaiB compete to bind to the CI domain.

The protein localises to the cytoplasm. The protein resides in the cell membrane. Functionally, key component of the KaiABC oscillator complex, which constitutes the main circadian regulator in cyanobacteria. Complex composition changes during the circadian cycle to control KaiC phosphorylation. KaiA stimulates KaiC autophosphorylation, while KaiB sequesters KaiA, leading to KaiC autodephosphorylation. KaiA binding to the KaiC CII domain yields KaiA(2-4):KaiC(6) complexes which stimulate KaiC autophosphorylation. Phospho-Ser-431 KaiC accumulation triggers binding of KaiB to form the KaiB(6):KaiC(6) complex, leading to changes in the output regulators CikA and SasA. KaiB switches to a thioredoxin-like fold (KaiB(fs)) in complex with KaiC. KaiB(6):KaiC(6) formation exposes a site for KaiA binding that sequesters KaiA from the CII domain, making the KaiC(6):KaiB(6):KaiA(12) complex that results in KaiC autodephosphorylation. Complete dephosphorylation of KaiC leads to dissociation of KaiA(2):KaiB(1), completing 1 cycle of the Kai oscillator. In terms of biological role, circadian oscillations can be generated in vitro by incubating KaiA, KaiB and KaiC with 1 mM ATP. The cycle is self-sustainable for at least 3 cycles and resistant to temperature changes. A very robust clock is reconstituted with KaiA, KaiB, KaiC, SasA, CikA and RpaA; output is measured by transcription from an appropriate reporter. Its function is as follows. A metamorphic protein which reversibly switches between an inactive tetrameric fold and a rare, thioredoxin-like monomeric fold (KaiB(fs)). KaiB(fs) binds phospho-KaiC, KaiA and CikA. KaiA and CikA compete for binding to KaiB(fs), and KaiB(fs) and SasA compete for binding to KaiC, thus the clock oscillator and output signal pathway are tightly coupled. The protein is Circadian clock oscillator protein KaiB of Synechococcus elongatus (strain ATCC 33912 / PCC 7942 / FACHB-805) (Anacystis nidulans R2).